Here is a 215-residue protein sequence, read N- to C-terminus: Oligoribonuclease (215 aa).

The region spanning 5-170 is the Exonuclease domain; sequence LVWIDCEMTG…ADIHESIREL (166 aa). Tyr-127 is a catalytic residue.

The protein belongs to the oligoribonuclease family.

The protein localises to the cytoplasm. Its function is as follows. 3'-to-5' exoribonuclease specific for small oligoribonucleotides. The polypeptide is Oligoribonuclease (Mycobacterium leprae (strain TN)).